Here is an 89-residue protein sequence, read N- to C-terminus: UPF0335 protein Nwi_0989 (89 aa).

Belongs to the UPF0335 family.

The protein is UPF0335 protein Nwi_0989 of Nitrobacter winogradskyi (strain ATCC 25391 / DSM 10237 / CIP 104748 / NCIMB 11846 / Nb-255).